Here is a 129-residue protein sequence, read N- to C-terminus: 3-aminoacrylate deaminase RutC (129 aa).

It belongs to the RutC family.

The enzyme catalyses (Z)-3-aminoacrylate + H2O + H(+) = 3-oxopropanoate + NH4(+). Functionally, involved in pyrimidine catabolism. Catalyzes the deamination of 3-aminoacrylate to malonic semialdehyde, a reaction that can also occur spontaneously. RutC may facilitate the reaction and modulate the metabolic fitness, rather than catalyzing essential functions. This Yersinia enterocolitica serotype O:8 / biotype 1B (strain NCTC 13174 / 8081) protein is 3-aminoacrylate deaminase RutC.